The primary structure comprises 202 residues: MNYPSNPNPSSTDFTEFFKFDDFDDTFEKIMEEIGREDHSSSPTLSWSSSEKLVAAEITSPLQTSLATSPMSFEIGDKDEIKKRKRHKEDPIIHVFKTKSSIDEKVALDDGYKWRKYGKKPITGSPFPRHYHKCSSPDCNVKKKIERDTNNPDYILTTYEGRHNHPSPSVVYCDSDDFDLNSLNNWSFQTANTYSFSHSAPY.

A DNA-binding region (WRKY) is located at residues 103-168; the sequence is DEKVALDDGY…YEGRHNHPSP (66 aa).

It belongs to the WRKY group II-c family.

It localises to the nucleus. In terms of biological role, transcription factor. Interacts specifically with the W box (5'-(T)TGAC[CT]-3'), a frequently occurring elicitor-responsive cis-acting element. The chain is Probable WRKY transcription factor 59 (WRKY59) from Arabidopsis thaliana (Mouse-ear cress).